We begin with the raw amino-acid sequence, 209 residues long: LexA repressor (209 aa).

A DNA-binding region (H-T-H motif) is located at residues 28–48; it reads RAEIAKELGFRSANAAEEHLK. Residues Ser126 and Lys163 each act as for autocatalytic cleavage activity in the active site.

This sequence belongs to the peptidase S24 family. In terms of assembly, homodimer.

The catalysed reaction is Hydrolysis of Ala-|-Gly bond in repressor LexA.. Functionally, represses a number of genes involved in the response to DNA damage (SOS response), including recA and lexA. In the presence of single-stranded DNA, RecA interacts with LexA causing an autocatalytic cleavage which disrupts the DNA-binding part of LexA, leading to derepression of the SOS regulon and eventually DNA repair. This chain is LexA repressor, found in Vibrio cholerae serotype O1 (strain ATCC 39541 / Classical Ogawa 395 / O395).